A 602-amino-acid polypeptide reads, in one-letter code: Elongation factor 4 (602 aa).

The tr-type G domain occupies 8–189; it reads KNIRNFSIIA…KIITTIPAPS (182 aa). GTP is bound by residues 20–25 and 136–139; these read DHGKST and NKID.

The protein belongs to the TRAFAC class translation factor GTPase superfamily. Classic translation factor GTPase family. LepA subfamily.

Its subcellular location is the cell inner membrane. The enzyme catalyses GTP + H2O = GDP + phosphate + H(+). In terms of biological role, required for accurate and efficient protein synthesis under certain stress conditions. May act as a fidelity factor of the translation reaction, by catalyzing a one-codon backward translocation of tRNAs on improperly translocated ribosomes. Back-translocation proceeds from a post-translocation (POST) complex to a pre-translocation (PRE) complex, thus giving elongation factor G a second chance to translocate the tRNAs correctly. Binds to ribosomes in a GTP-dependent manner. The polypeptide is Elongation factor 4 (Helicobacter pylori (strain Shi470)).